We begin with the raw amino-acid sequence, 109 residues long: uncharacterized protein (109 aa).

This is an uncharacterized protein from Bacillus subtilis (strain 168).